The primary structure comprises 217 residues: MSSLLISYESDFKTTLEQAKASLAEAPSQPLSQRNTTLKHVEQQQDELFDLLDQMDVEVNNSIGDASERATYKAKLREWKKTIQSDIKRPLQSLVDSGDRDRLFGDLNASNIDDDQRQQLLSNHAILQKSGDRLKDASRIANETEGIGSQIMMDLRSQRETLENARQTLFQADSYVDKSIKTLKTMTRRLVANKFISYAIIAVLILLILLVLFSKFK.

Ser-2 carries the post-translational modification N-acetylserine. The Cytoplasmic portion of the chain corresponds to 2 to 194 (SSLLISYESD…TMTRRLVANK (193 aa)). A phosphoserine mark is found at Ser-110 and Ser-149. Residues 124-186 (HAILQKSGDR…DKSIKTLKTM (63 aa)) form the t-SNARE coiled-coil homology domain. A helical; Anchor for type IV membrane protein membrane pass occupies residues 195 to 215 (FISYAIIAVLILLILLVLFSK). At 216–217 (FK) the chain is on the vesicular side.

Belongs to the VTI1 family. As to quaternary structure, forms SNARE complexes with the t-SNAREs VAM3 and VAM7, and the v-SNAREs NYV1 and YKT6 on vacuolar membranes, which are involved in biosynthetic transport pathways to the vacuole and in homotypic vacuole fusion. Forms SNARE complexes with the cis-Golgi t-SNARE SED5 and the v-SNAREs SFT1 and YTK6, which are involved in retrograde traffic to the cis-Golgi compartment. Forms SNARE complexes with the t-SNAREs TLG1 and TLG2, and either the v-SNARE SNC1 or SNC2, which are involved in traffic from early endosomes to the trans-Golgi network (TGN). Forms SNARE complexes with the t-SNAREs PEP12 and either SYN8 or TLG1, and the v-SNARE SNC1, which are involved in traffic from the TGN to the prevacuolar compartment (PVC).

The protein localises to the prevacuolar compartment membrane. It localises to the golgi apparatus membrane. Its function is as follows. t-SNARE found in various SNARE complexes involved in multiple transport pathways. The composition of the t-SNARE complexes is specific for a limited number of v-SNAREs and therefore allows only the vesicles carrying the matching v-SNARE to fuse. This chain is t-SNARE VTI1 (VTI1), found in Saccharomyces cerevisiae (strain ATCC 204508 / S288c) (Baker's yeast).